The following is a 356-amino-acid chain: Alanine racemase, catabolic (356 aa).

Lys35 functions as the Proton acceptor; specific for D-alanine in the catalytic mechanism. Residue Lys35 is modified to N6-(pyridoxal phosphate)lysine. Arg130 serves as a coordination point for substrate. The Proton acceptor; specific for L-alanine role is filled by Tyr253. Residue Met301 coordinates substrate.

It belongs to the alanine racemase family. It depends on pyridoxal 5'-phosphate as a cofactor.

The catalysed reaction is L-alanine = D-alanine. In terms of biological role, isomerizes L-alanine to D-alanine which is then oxidized to pyruvate by DadA. The chain is Alanine racemase, catabolic (dadX) from Salmonella typhi.